The sequence spans 359 residues: Stearoyl-CoA desaturase (359 aa).

The Cytoplasmic segment spans residues 1 to 72 (MPAHLLQDDI…EGPSPKVEYV (72 aa)). The helical transmembrane segment at 73–93 (WRNIILMSLLHLGALYGITLI) threads the bilayer. N75 contacts substrate. Residues 94–97 (PTCK) are Lumenal-facing. Residues 98–118 (FYTWLWGVFYYFVSALGITAG) traverse the membrane as a helical segment. Residues 119-217 (AHRLWSHRSY…EKLVMFQRRY (99 aa)) lie on the Cytoplasmic side of the membrane. The Fe cation site is built by H120 and H125. Positions 120 to 125 (HRLWSH) match the Histidine box-1 motif. Substrate is bound by residues N148, R155, and D156. Positions 157, 160, and 161 each coordinate Fe cation. The short motif at 157-161 (HRAHH) is the Histidine box-2 element. The substrate site is built by R188 and K189. Phosphoserine occurs at positions 198 and 203. A helical transmembrane segment spans residues 218–237 (YKPGLLMMCFILPTLVPWYF). Over 238–241 (WGET) the chain is Lumenal. Residues 242 to 263 (FQNSVFVATFLRYAVVLNATWL) traverse the membrane as a helical segment. W262 is a binding site for substrate. Residues 264-359 (VNSAAHLFGY…RTGDGNYKSG (96 aa)) are Cytoplasmic-facing. Positions 269, 298, 301, and 302 each coordinate Fe cation. The Histidine box-3 signature appears at 298–302 (HNYHH).

Belongs to the fatty acid desaturase type 1 family. As to quaternary structure, may self-associate and form homodimers. It depends on Fe(2+) as a cofactor. Detected in fetal liver, lung and brain. Highly expressed in adult adipose tissue, and at lower levels in adult brain and lung.

The protein localises to the endoplasmic reticulum membrane. It carries out the reaction octadecanoyl-CoA + 2 Fe(II)-[cytochrome b5] + O2 + 2 H(+) = (9Z)-octadecenoyl-CoA + 2 Fe(III)-[cytochrome b5] + 2 H2O. The catalysed reaction is hexadecanoyl-CoA + 2 Fe(II)-[cytochrome b5] + O2 + 2 H(+) = (9Z)-hexadecenoyl-CoA + 2 Fe(III)-[cytochrome b5] + 2 H2O. Stearoyl-CoA desaturase that utilizes O(2) and electrons from reduced cytochrome b5 to introduce the first double bond into saturated fatty acyl-CoA substrates. Catalyzes the insertion of a cis double bond at the delta-9 position into fatty acyl-CoA substrates including palmitoyl-CoA and stearoyl-CoA. Gives rise to a mixture of 16:1 and 18:1 unsaturated fatty acids. Plays an important role in lipid biosynthesis. Plays an important role in regulating the expression of genes that are involved in lipogenesis and in regulating mitochondrial fatty acid oxidation. Plays an important role in body energy homeostasis. Contributes to the biosynthesis of membrane phospholipids, cholesterol esters and triglycerides. The sequence is that of Stearoyl-CoA desaturase (SCD) from Homo sapiens (Human).